Consider the following 442-residue polypeptide: Cytokine receptor-like factor 3 (442 aa).

The residue at position 1 (Met-1) is an N-acetylmethionine. A coiled-coil region spans residues 10–57 (ELLLQEARENVEAAQSYRRELGHRLEGLREARRQIKESASQTRDVLKQ). In terms of domain architecture, Fibronectin type-III spans 181–274 (PPVQIEELIE…PQIGHSTLVP (94 aa)).

The protein belongs to the cytokine receptor-like factor 3 family. As to expression, expressed in several embryonic and adult tissues, including adult and fetal brain, liver, spleen and pancreas. Expressed in adult, but not fetal kidney. Expressed in skin and squamous cell carcinoma (SCC) and in several other cancer types. Also detected in lesion actinic keratosis (AK).

It is found in the cytoplasm. In terms of biological role, may play a role in the negative regulation of cell cycle progression. The sequence is that of Cytokine receptor-like factor 3 (CRLF3) from Homo sapiens (Human).